The following is a 66-amino-acid chain: Small ribosomal subunit protein eS27 (66 aa).

Cysteine 21, cysteine 24, cysteine 40, and cysteine 43 together coordinate Zn(2+). A C4-type zinc finger spans residues 21 to 43 (CPNCGNEQTIFSHATFPVRCLSC).

It belongs to the eukaryotic ribosomal protein eS27 family. As to quaternary structure, part of the 30S ribosomal subunit. Zn(2+) is required as a cofactor.

The polypeptide is Small ribosomal subunit protein eS27 (Saccharolobus solfataricus (strain ATCC 35092 / DSM 1617 / JCM 11322 / P2) (Sulfolobus solfataricus)).